We begin with the raw amino-acid sequence, 197 residues long: Nucleoside triphosphate pyrophosphatase (197 aa).

The Proton acceptor role is filled by Asp-74.

Belongs to the Maf family. A divalent metal cation is required as a cofactor.

It is found in the cytoplasm. The enzyme catalyses a ribonucleoside 5'-triphosphate + H2O = a ribonucleoside 5'-phosphate + diphosphate + H(+). It catalyses the reaction a 2'-deoxyribonucleoside 5'-triphosphate + H2O = a 2'-deoxyribonucleoside 5'-phosphate + diphosphate + H(+). Its function is as follows. Nucleoside triphosphate pyrophosphatase. May have a dual role in cell division arrest and in preventing the incorporation of modified nucleotides into cellular nucleic acids. This Granulibacter bethesdensis (strain ATCC BAA-1260 / CGDNIH1) protein is Nucleoside triphosphate pyrophosphatase.